The chain runs to 610 residues: MISTVLRRSILGTSRRTLAASVTSINAALFHNLAPAAATVSDLANGATNVKSLPSNSSPFGVKVRDFHVKSVPSEFRSSIVSSAGFAAQEYAPSYENDGGIGDSESVGSSGGGDGLAIADLGISPEIVKALKGRGIEKLFPIQKAVLEPAMEGRDMIGRARTGTGKTLAFGIPIIDKIIKFNAKHGRGKNPQCLVLAPTRELARQVEKEFRESAPSLDTICLYGGTPIGQQMRELNYGIDVAVGTPGRIIDLMKRGALNLSEVQFVVLDEADQMLQVGFAEDVEIILQKLPAKRQSMMFSATMPSWIRSLTKKYLNNPLTIDLVGDSDQKLADGITMYSIAADSYGRASIIGPLVKEHGKGGKCIVFTQTKRDADRLAFGLAKSYKCEALHGDISQAQRERTLAGFRDGNFSILVATDVAARGLDVPNVDLVIHYELPNNTETFVHRTGRTGRAGKKGSAILIHGQDQTRAVKMIEKEVGSRFNELPSIAVERGSASMFEGVGARSGGSFGGGRSGGGGYGSYGSSSGRSGGGSYGGYGGSSGRSGGGGGSYGGSGGSSSRYSGGSDRSSGFGSFGSGGSSGGFGSDRSSQSSGRSSFGGFGSNDGKRSY.

A mitochondrion-targeting transit peptide spans 1-66; sequence MISTVLRRSI…SSPFGVKVRD (66 aa). The Q motif signature appears at 116–144; sequence LAIADLGISPEIVKALKGRGIEKLFPIQK. One can recognise a Helicase ATP-binding domain in the interval 147 to 321; that stretch reads LEPAMEGRDM…KKYLNNPLTI (175 aa). 160–167 contacts ATP; sequence ARTGTGKT. A DEAD box motif is present at residues 269-272; that stretch reads DEAD. Residues 350–494 enclose the Helicase C-terminal domain; the sequence is IIGPLVKEHG…ELPSIAVERG (145 aa). Positions 542-557 are enriched in gly residues; sequence SGRSGGGGGSYGGSGG. The interval 542-610 is disordered; that stretch reads SGRSGGGGGS…FGSNDGKRSY (69 aa). A compositionally biased stretch (low complexity) spans 558–572; it reads SSSRYSGGSDRSSGF. A compositionally biased stretch (gly residues) spans 573–585; it reads GSFGSGGSSGGFG. Over residues 586 to 596 the composition is skewed to low complexity; that stretch reads SDRSSQSSGRS.

The protein belongs to the DEAD box helicase family. DDX21/DDX50 subfamily.

It is found in the mitochondrion. It carries out the reaction ATP + H2O = ADP + phosphate + H(+). This chain is DEAD-box ATP-dependent RNA helicase 9, mitochondrial (RH9), found in Arabidopsis thaliana (Mouse-ear cress).